Reading from the N-terminus, the 323-residue chain is Beta-ketoacyl-[acyl-carrier-protein] synthase III (323 aa).

Active-site residues include cysteine 112 and histidine 250. The segment at 251–255 is ACP-binding; the sequence is QANYR. The active site involves asparagine 280.

This sequence belongs to the thiolase-like superfamily. FabH family. Homodimer.

It is found in the cytoplasm. The catalysed reaction is malonyl-[ACP] + acetyl-CoA + H(+) = 3-oxobutanoyl-[ACP] + CO2 + CoA. It functions in the pathway lipid metabolism; fatty acid biosynthesis. In terms of biological role, catalyzes the condensation reaction of fatty acid synthesis by the addition to an acyl acceptor of two carbons from malonyl-ACP. Catalyzes the first condensation reaction which initiates fatty acid synthesis and may therefore play a role in governing the total rate of fatty acid production. Possesses both acetoacetyl-ACP synthase and acetyl transacylase activities. Its substrate specificity determines the biosynthesis of branched-chain and/or straight-chain of fatty acids. The polypeptide is Beta-ketoacyl-[acyl-carrier-protein] synthase III (Clostridium beijerinckii (strain ATCC 51743 / NCIMB 8052) (Clostridium acetobutylicum)).